The sequence spans 710 residues: Chaperonin-containing T-complex member BBS12 (710 aa).

This sequence belongs to the TCP-1 chaperonin family. BBS12 subfamily. Component of the chaperonin-containing T-complex (TRiC), a heterooligomeric complex of about 850 to 900 kDa that forms two stacked rings, 12 to 16 nm in diameter. Interacts with MKKS.

The protein localises to the cell projection. It is found in the cilium. In terms of biological role, component of the chaperonin-containing T-complex (TRiC), a molecular chaperone complex that assists the folding of proteins upon ATP hydrolysis. As part of the TRiC complex may play a role in the assembly of BBSome, a complex involved in ciliogenesis regulating transports vesicles to the cilia. Involved in adipogenic differentiation. The protein is Chaperonin-containing T-complex member BBS12 (BBS12) of Pongo abelii (Sumatran orangutan).